The following is a 473-amino-acid chain: Catalase easC (473 aa).

The segment covering 1-15 (MASEVSVASSGSEHS) has biased composition (low complexity). The tract at residues 1–31 (MASEVSVASSGSEHSGAQKCPFQDPGLSSMD) is disordered. The active site involves His-54. Tyr-344 serves as a coordination point for heme. The disordered stretch occupies residues 369 to 388 (DGARPEKAEMAPQKVPSQEH).

It belongs to the catalase family. Heme serves as cofactor.

It participates in alkaloid biosynthesis; ergot alkaloid biosynthesis. Functionally, catalase; part of the gene cluster that mediates the biosynthesis of fungal ergot alkaloid. DmaW catalyzes the first step of ergot alkaloid biosynthesis by condensing dimethylallyl diphosphate (DMAP) and tryptophan to form 4-dimethylallyl-L-tryptophan. The second step is catalyzed by the methyltransferase easF that methylates 4-dimethylallyl-L-tryptophan in the presence of S-adenosyl-L-methionine, resulting in the formation of 4-dimethylallyl-L-abrine. The catalase easC and the FAD-dependent oxidoreductase easE then transform 4-dimethylallyl-L-abrine to chanoclavine-I which is further oxidized by easD in the presence of NAD(+), resulting in the formation of chanoclavine-I aldehyde. Agroclavine dehydrogenase easG then mediates the conversion of chanoclavine-I aldehyde to agroclavine via a non-enzymatic adduct reaction: the substrate is an iminium intermediate that is formed spontaneously from chanoclavine-I aldehyde in the presence of glutathione. The presence of easA is not required to complete this reaction. Further conversion of agroclavine to paspalic acid is a two-step process involving oxidation of agroclavine to elymoclavine and of elymoclavine to paspalic acid, the second step being performed by the elymoclavine oxidase cloA. Paspalic acid is then further converted to D-lysergic acid. Ergopeptines are assembled from D-lysergic acid and three different amino acids by the D-lysergyl-peptide-synthetases composed each of a monomudular and a trimodular nonribosomal peptide synthetase subunit. LpsB and lpsC encode the monomodular subunits responsible for D-lysergic acid activation and incorporation into the ergopeptine backbone. LpsA1 and A2 subunits encode the trimodular nonribosomal peptide synthetase assembling the tripeptide portion of ergopeptines. LpsA1 is responsible for formation of the major ergopeptine, ergotamine, and lpsA2 for alpha-ergocryptine, the minor ergopeptine of the total alkaloid mixture elaborated by C.purpurea. D-lysergyl-tripeptides are assembled by the nonribosomal peptide synthetases and released as N-(D-lysergyl-aminoacyl)-lactams. Cyclolization of the D-lysergyl-tripeptides is performed by the Fe(2+)/2-ketoglutarate-dependent dioxygenase easH which introduces a hydroxyl group into N-(D-lysergyl-aminoacyl)-lactam at alpha-C of the aminoacyl residue followed by spontaneous condensation with the terminal lactam carbonyl group. This is Catalase easC from Claviceps purpurea (Ergot fungus).